We begin with the raw amino-acid sequence, 243 residues long: 7-carboxy-7-deazaguanine synthase (243 aa).

Residues Ile15–Gly17 and Arg30 contribute to the substrate site. Residues Val21 to Asn239 form the Radical SAM core domain. [4Fe-4S] cluster is bound by residues Cys34, Cys38, and Cys41. Ser43 is a binding site for Mg(2+). Ser81 is a substrate binding site. Residues Gly83 and Ser127–Lys129 contribute to the S-adenosyl-L-methionine site.

The protein belongs to the radical SAM superfamily. 7-carboxy-7-deazaguanine synthase family. In terms of assembly, homodimer. [4Fe-4S] cluster is required as a cofactor. S-adenosyl-L-methionine serves as cofactor. It depends on Mg(2+) as a cofactor.

It carries out the reaction 6-carboxy-5,6,7,8-tetrahydropterin + H(+) = 7-carboxy-7-deazaguanine + NH4(+). Its pathway is purine metabolism; 7-cyano-7-deazaguanine biosynthesis. Its function is as follows. Catalyzes the complex heterocyclic radical-mediated conversion of 6-carboxy-5,6,7,8-tetrahydropterin (CPH4) to 7-carboxy-7-deazaguanine (CDG), a step common to the biosynthetic pathways of all 7-deazapurine-containing compounds. The protein is 7-carboxy-7-deazaguanine synthase of Bacillus subtilis (strain 168).